Consider the following 165-residue polypeptide: SsrA-binding protein (165 aa).

This sequence belongs to the SmpB family.

It is found in the cytoplasm. In terms of biological role, required for rescue of stalled ribosomes mediated by trans-translation. Binds to transfer-messenger RNA (tmRNA), required for stable association of tmRNA with ribosomes. tmRNA and SmpB together mimic tRNA shape, replacing the anticodon stem-loop with SmpB. tmRNA is encoded by the ssrA gene; the 2 termini fold to resemble tRNA(Ala) and it encodes a 'tag peptide', a short internal open reading frame. During trans-translation Ala-aminoacylated tmRNA acts like a tRNA, entering the A-site of stalled ribosomes, displacing the stalled mRNA. The ribosome then switches to translate the ORF on the tmRNA; the nascent peptide is terminated with the 'tag peptide' encoded by the tmRNA and targeted for degradation. The ribosome is freed to recommence translation, which seems to be the essential function of trans-translation. This chain is SsrA-binding protein, found in Ruthia magnifica subsp. Calyptogena magnifica.